A 64-amino-acid polypeptide reads, in one-letter code: Large ribosomal subunit protein bL28 (64 aa).

This sequence belongs to the bacterial ribosomal protein bL28 family.

The polypeptide is Large ribosomal subunit protein bL28 (Bifidobacterium longum (strain NCC 2705)).